The sequence spans 265 residues: Phosphate import ATP-binding protein PstB (265 aa).

Residues 18 to 260 enclose the ABC transporter domain; sequence MECRDCHVYY…PEDPRTESYI (243 aa). Position 50 to 57 (50 to 57) interacts with ATP; sequence GPSGCGKS.

This sequence belongs to the ABC transporter superfamily. Phosphate importer (TC 3.A.1.7) family. As to quaternary structure, the complex is composed of two ATP-binding proteins (PstB), two transmembrane proteins (PstC and PstA) and a solute-binding protein (PstS).

The protein resides in the cell inner membrane. It catalyses the reaction phosphate(out) + ATP + H2O = ADP + 2 phosphate(in) + H(+). Its function is as follows. Part of the ABC transporter complex PstSACB involved in phosphate import. Responsible for energy coupling to the transport system. The chain is Phosphate import ATP-binding protein PstB from Ruegeria pomeroyi (strain ATCC 700808 / DSM 15171 / DSS-3) (Silicibacter pomeroyi).